A 288-amino-acid polypeptide reads, in one-letter code: Intermediate transcription factor 3 small subunit (288 aa).

This sequence belongs to the orthopoxvirus OPG134 family. In terms of assembly, heterodimer of a 45 kDa (A23R) and a 32 kDa (A8R) subunit to form the virus intermediate transcription factor (VITF)-3.

Its function is as follows. Acts with RNA polymerase to initiate transcription from intermediate gene promoters. This Homo sapiens (Human) protein is Intermediate transcription factor 3 small subunit (OPG134).